The sequence spans 268 residues: Cytochrome b-c1 complex subunit Rieske-3, mitochondrial (268 aa).

Residues Met1 to Phe56 constitute a mitochondrion transit peptide. Over Ser57 to Arg105 the chain is Mitochondrial matrix. A helical membrane pass occupies residues Ala106–Leu128. At Lys129–Gly268 the chain is on the mitochondrial intermembrane side. The Rieske domain maps to Ile178–Leu266. Cys211, His213, Cys230, and His233 together coordinate [2Fe-2S] cluster. Cys216 and Cys232 form a disulfide bridge.

Belongs to the Rieske iron-sulfur protein family. Component of the ubiquinol-cytochrome c oxidoreductase (cytochrome b-c1 complex, complex III, CIII), a multisubunit enzyme composed of 3 respiratory subunits cytochrome b, cytochrome c1 and Rieske protein, 2 core protein subunits, and several low-molecular weight protein subunits. The complex exists as an obligatory dimer and forms supercomplexes (SCs) in the inner mitochondrial membrane with cytochrome c oxidase (complex IV, CIV). [2Fe-2S] cluster is required as a cofactor. As to expression, high levels are seen in the flowers while a low level expression is seen in the roots, leaves and stems.

The protein resides in the mitochondrion inner membrane. The enzyme catalyses a quinol + 2 Fe(III)-[cytochrome c](out) = a quinone + 2 Fe(II)-[cytochrome c](out) + 2 H(+)(out). Functionally, component of the ubiquinol-cytochrome c oxidoreductase, a multisubunit transmembrane complex that is part of the mitochondrial electron transport chain which drives oxidative phosphorylation. The respiratory chain contains 3 multisubunit complexes succinate dehydrogenase (complex II, CII), ubiquinol-cytochrome c oxidoreductase (cytochrome b-c1 complex, complex III, CIII) and cytochrome c oxidase (complex IV, CIV), that cooperate to transfer electrons derived from NADH and succinate to molecular oxygen, creating an electrochemical gradient over the inner membrane that drives transmembrane transport and the ATP synthase. The cytochrome b-c1 complex catalyzes electron transfer from ubiquinol to cytochrome c, linking this redox reaction to translocation of protons across the mitochondrial inner membrane, with protons being carried across the membrane as hydrogens on the quinol. In the process called Q cycle, 2 protons are consumed from the matrix, 4 protons are released into the intermembrane space and 2 electrons are passed to cytochrome c. The Rieske protein is a catalytic core subunit containing a [2Fe-2S] iron-sulfur cluster. It cycles between 2 conformational states during catalysis to transfer electrons from the quinol bound in the Q(0) site in cytochrome b to cytochrome c1. This Nicotiana tabacum (Common tobacco) protein is Cytochrome b-c1 complex subunit Rieske-3, mitochondrial.